Here is a 185-residue protein sequence, read N- to C-terminus: Large ribosomal subunit protein uL5c (185 aa).

Belongs to the universal ribosomal protein uL5 family. In terms of assembly, part of the 50S ribosomal subunit; contacts the 5S rRNA.

It is found in the plastid. The protein resides in the chloroplast. Binds 5S rRNA, forms part of the central protuberance of the 50S subunit. In Chlorokybus atmophyticus (Soil alga), this protein is Large ribosomal subunit protein uL5c (rpl5).